Reading from the N-terminus, the 154-residue chain is Fucose mutarotase (154 aa).

His-24 serves as the catalytic Proton donor. Residue Asp-32 coordinates substrate. Asp-69 is a catalytic residue. Substrate is bound by residues Met-79, Tyr-120, Tyr-138, and Asn-140. Tyr-120 is an active-site residue.

The protein belongs to the RbsD / FucU family. In terms of assembly, mainly homodimer, but also exists as homotetramer, homooctamer, and homodecamer. The homodimeric form seems catalytically inactive.

The enzyme catalyses alpha-L-fucose = beta-L-fucose. It participates in carbohydrate metabolism; L-fucose metabolism. Involved in the interconversion between alpha- and beta-L-fucoses. L-Fucose (6-deoxy-L-galactose) exists as alpha-L-fucose (29.5%) and beta-L-fucose (70.5%), the beta-form is metabolized through the salvage pathway. GDP-L-fucose formed either by the de novo or salvage pathways is transported into the endoplasmic reticulum, where it serves as a substrate for N- and O-glycosylations by fucosyltransferases. Fucosylated structures expressed on cell surfaces or secreted in biological fluids are believed to play a critical role in cell-cell adhesion and recognition processes. The polypeptide is Fucose mutarotase (FUOM) (Homo sapiens (Human)).